Reading from the N-terminus, the 146-residue chain is Stress-responsive DNAJB4-interacting membrane protein 1 (146 aa).

The N-terminal stretch at Met1 to Gly26 is a signal peptide. At Cys27 to Pro66 the chain is on the extracellular side. A helical membrane pass occupies residues Pro67–Ile87. The Cytoplasmic segment spans residues Ser88–Gln94. A helical transmembrane segment spans residues Val95–Ser115. The Extracellular segment spans residues His116–Ile146.

Homodimer. Interacts with DNAJB4. In terms of tissue distribution, expressed in brain with higher detection in neurons than astrocytes. Decreased expression in Alzheimer brains. Detected at protein level in brain and cervix.

Its subcellular location is the membrane. Functionally, promotes neuronal cells survival to stress conditions. The polypeptide is Stress-responsive DNAJB4-interacting membrane protein 1 (SDIM1) (Homo sapiens (Human)).